Reading from the N-terminus, the 631-residue chain is Pescadillo homolog (631 aa).

The 94-residue stretch at 321-414 (RLRTLFKGLK…QLLPTNDYFL (94 aa)) folds into the BRCT domain. Positions 428 to 442 (SKRDSYIPPEEKALH) are enriched in basic and acidic residues. Disordered regions lie at residues 428 to 471 (SKRD…EADQ), 489 to 561 (YKKY…VDEH), and 602 to 631 (ADNK…KLVK). Residues Ser453 and Ser457 each carry the phosphoserine modification. 2 stretches are compositionally biased toward acidic residues: residues 453 to 471 (SEEE…EADQ) and 498 to 525 (VNED…EDVD). Residues 526 to 538 (EQTKRKQQEKEKM) show a composition bias toward basic and acidic residues. A compositionally biased stretch (basic residues) spans 544 to 553 (KVHKVNKRQV). The stretch at 591 to 631 (WLLRKKRRNIDADNKEAKKAAKREARKQAAEAAARAAKLVK) forms a coiled coil. The span at 602–619 (ADNKEAKKAAKREARKQA) shows a compositional bias: basic and acidic residues. Residues 620–631 (AEAAARAAKLVK) are compositionally biased toward low complexity.

The protein belongs to the pescadillo family.

It is found in the nucleus. It localises to the nucleolus. The protein resides in the nucleoplasm. In terms of biological role, required for maturation of ribosomal RNAs and formation of the large ribosomal subunit. The sequence is that of Pescadillo homolog from Drosophila pseudoobscura pseudoobscura (Fruit fly).